The chain runs to 733 residues: Alpha,alpha-trehalose-phosphate synthase [UDP-forming] A (733 aa).

The protein in the N-terminal section; belongs to the glycosyltransferase 20 family. In the C-terminal section; belongs to the trehalose phosphatase family.

The catalysed reaction is D-glucose 6-phosphate + UDP-alpha-D-glucose = alpha,alpha-trehalose 6-phosphate + UDP + H(+). Functionally, synthesizes trehalose 6-phosphate, the precursor for the production of trehalose, the main carbohydrate storage reserve of the dormant spore. Trehalose accumulates in both prestalk and prespore cells and then is rapidly metabolized during terminal differentiation of stalk cells, while being stored in spores, where it serves as the principal energy and carbon source for germination. The chain is Alpha,alpha-trehalose-phosphate synthase [UDP-forming] A (tpsA) from Dictyostelium discoideum (Social amoeba).